The following is a 1072-amino-acid chain: Carbamoyl phosphate synthase large chain (1072 aa).

Residues 1-401 (MPKRLDINTI…SLLKAVRSLE (401 aa)) are carboxyphosphate synthetic domain. Residues Arg129, Arg169, Gly175, Gly176, Lys208, Ile210, Glu215, Gly241, Val242, His243, Gln284, and Glu298 each contribute to the ATP site. The region spanning 133–327 (RTLMQELNEP…IAKLAAKIAV (195 aa)) is the ATP-grasp 1 domain. Mg(2+) contacts are provided by Gln284, Glu298, and Asn300. 3 residues coordinate Mn(2+): Gln284, Glu298, and Asn300. The tract at residues 402-546 (LGIYHLELDH…YSTYADENES (145 aa)) is oligomerization domain. The tract at residues 547–929 (IVTDRKSVVV…ALYKGLVASG (383 aa)) is carbamoyl phosphate synthetic domain. The 191-residue stretch at 671-861 (EAALTKLGIP…MANVATKVIL (191 aa)) folds into the ATP-grasp 2 domain. ATP is bound by residues Arg707, Arg746, Glu752, Gly777, Val778, His779, Ser780, Gln820, and Glu832. The Mg(2+) site is built by Gln820, Glu832, and Asn834. Positions 820, 832, and 834 each coordinate Mn(2+). One can recognise an MGS-like domain in the interval 930-1072 (INIPTHGSVI…QTKRHEVVHA (143 aa)). Positions 930–1072 (INIPTHGSVI…QTKRHEVVHA (143 aa)) are allosteric domain.

The protein belongs to the CarB family. In terms of assembly, composed of two chains; the small (or glutamine) chain promotes the hydrolysis of glutamine to ammonia, which is used by the large (or ammonia) chain to synthesize carbamoyl phosphate. Tetramer of heterodimers (alpha,beta)4. Requires Mg(2+) as cofactor. The cofactor is Mn(2+).

It catalyses the reaction hydrogencarbonate + L-glutamine + 2 ATP + H2O = carbamoyl phosphate + L-glutamate + 2 ADP + phosphate + 2 H(+). The enzyme catalyses hydrogencarbonate + NH4(+) + 2 ATP = carbamoyl phosphate + 2 ADP + phosphate + 2 H(+). It participates in amino-acid biosynthesis; L-arginine biosynthesis; carbamoyl phosphate from bicarbonate: step 1/1. Its pathway is pyrimidine metabolism; UMP biosynthesis via de novo pathway; (S)-dihydroorotate from bicarbonate: step 1/3. Its function is as follows. Large subunit of the glutamine-dependent carbamoyl phosphate synthetase (CPSase). CPSase catalyzes the formation of carbamoyl phosphate from the ammonia moiety of glutamine, carbonate, and phosphate donated by ATP, constituting the first step of 2 biosynthetic pathways, one leading to arginine and/or urea and the other to pyrimidine nucleotides. The large subunit (synthetase) binds the substrates ammonia (free or transferred from glutamine from the small subunit), hydrogencarbonate and ATP and carries out an ATP-coupled ligase reaction, activating hydrogencarbonate by forming carboxy phosphate which reacts with ammonia to form carbamoyl phosphate. This Bacillus thuringiensis (strain Al Hakam) protein is Carbamoyl phosphate synthase large chain.